Reading from the N-terminus, the 311-residue chain is Coproporphyrin III ferrochelatase 1 (311 aa).

Fe-coproporphyrin III contacts are provided by residues tyrosine 12, arginine 29, arginine 45 to tyrosine 46, serine 53, and tyrosine 124. Fe(2+)-binding residues include histidine 182 and glutamate 263.

It belongs to the ferrochelatase family.

It is found in the cytoplasm. It catalyses the reaction Fe-coproporphyrin III + 2 H(+) = coproporphyrin III + Fe(2+). It participates in porphyrin-containing compound metabolism; protoheme biosynthesis. Its function is as follows. Involved in coproporphyrin-dependent heme b biosynthesis. Catalyzes the insertion of ferrous iron into coproporphyrin III to form Fe-coproporphyrin III. The protein is Coproporphyrin III ferrochelatase 1 of Bacillus anthracis.